The primary structure comprises 124 residues: Small ribosomal subunit protein uS12 (124 aa).

The interval 1-24 is disordered; sequence MPTINQLIKKPRKSQKEKTASPAL. The residue at position 89 (Asp89) is a 3-methylthioaspartic acid.

The protein belongs to the universal ribosomal protein uS12 family. As to quaternary structure, part of the 30S ribosomal subunit. Contacts proteins S8 and S17. May interact with IF1 in the 30S initiation complex.

Its function is as follows. With S4 and S5 plays an important role in translational accuracy. Interacts with and stabilizes bases of the 16S rRNA that are involved in tRNA selection in the A site and with the mRNA backbone. Located at the interface of the 30S and 50S subunits, it traverses the body of the 30S subunit contacting proteins on the other side and probably holding the rRNA structure together. The combined cluster of proteins S8, S12 and S17 appears to hold together the shoulder and platform of the 30S subunit. In Borrelia hermsii (strain HS1 / DAH), this protein is Small ribosomal subunit protein uS12.